Reading from the N-terminus, the 637-residue chain is Threonine--tRNA ligase (637 aa).

Residues 1-61 (MPVITLPDGS…DKDAELAIVT (61 aa)) enclose the TGS domain. Positions 242-533 (DHRKIGKKLG…LIEHYEGAFP (292 aa)) are catalytic. The Zn(2+) site is built by C333, H384, and H510.

Belongs to the class-II aminoacyl-tRNA synthetase family. In terms of assembly, homodimer. Zn(2+) is required as a cofactor.

Its subcellular location is the cytoplasm. It carries out the reaction tRNA(Thr) + L-threonine + ATP = L-threonyl-tRNA(Thr) + AMP + diphosphate + H(+). Functionally, catalyzes the attachment of threonine to tRNA(Thr) in a two-step reaction: L-threonine is first activated by ATP to form Thr-AMP and then transferred to the acceptor end of tRNA(Thr). Also edits incorrectly charged L-seryl-tRNA(Thr). This Hahella chejuensis (strain KCTC 2396) protein is Threonine--tRNA ligase.